Here is a 273-residue protein sequence, read N- to C-terminus: 4-hydroxy-tetrahydrodipicolinate reductase (273 aa).

NAD(+)-binding positions include 12-17 and Glu38; that span reads GAGGRM. An NADP(+)-binding site is contributed by Arg39. NAD(+)-binding positions include 102–104 and 126–129; these read GTT and AANF. His159 (proton donor/acceptor) is an active-site residue. Residue His160 coordinates (S)-2,3,4,5-tetrahydrodipicolinate. Lys163 acts as the Proton donor in catalysis. 169–170 serves as a coordination point for (S)-2,3,4,5-tetrahydrodipicolinate; that stretch reads GT.

Belongs to the DapB family. In terms of assembly, homotetramer.

The protein resides in the cytoplasm. It carries out the reaction (S)-2,3,4,5-tetrahydrodipicolinate + NAD(+) + H2O = (2S,4S)-4-hydroxy-2,3,4,5-tetrahydrodipicolinate + NADH + H(+). The catalysed reaction is (S)-2,3,4,5-tetrahydrodipicolinate + NADP(+) + H2O = (2S,4S)-4-hydroxy-2,3,4,5-tetrahydrodipicolinate + NADPH + H(+). It functions in the pathway amino-acid biosynthesis; L-lysine biosynthesis via DAP pathway; (S)-tetrahydrodipicolinate from L-aspartate: step 4/4. Its function is as follows. Catalyzes the conversion of 4-hydroxy-tetrahydrodipicolinate (HTPA) to tetrahydrodipicolinate. In Shigella flexneri, this protein is 4-hydroxy-tetrahydrodipicolinate reductase.